Reading from the N-terminus, the 397-residue chain is Tryptophan synthase beta chain (397 aa).

N6-(pyridoxal phosphate)lysine is present on Lys-87.

Belongs to the TrpB family. Tetramer of two alpha and two beta chains. Pyridoxal 5'-phosphate serves as cofactor.

The catalysed reaction is (1S,2R)-1-C-(indol-3-yl)glycerol 3-phosphate + L-serine = D-glyceraldehyde 3-phosphate + L-tryptophan + H2O. The protein operates within amino-acid biosynthesis; L-tryptophan biosynthesis; L-tryptophan from chorismate: step 5/5. Its function is as follows. The beta subunit is responsible for the synthesis of L-tryptophan from indole and L-serine. This chain is Tryptophan synthase beta chain, found in Salmonella agona (strain SL483).